The following is a 316-amino-acid chain: DNA-directed RNA polymerase III subunit RPC6 (316 aa).

Alanine 2 is subject to N-acetylalanine. Glycyl lysine isopeptide (Lys-Gly) (interchain with G-Cter in SUMO2) cross-links involve residues lysine 5 and lysine 7. Positions 287, 290, 296, and 307 each coordinate [4Fe-4S] cluster.

This sequence belongs to the eukaryotic RPC34/RPC39 RNA polymerase subunit family. In terms of assembly, component of the RNA polymerase III complex consisting of 17 subunits: a ten-subunit horseshoe-shaped catalytic core composed of POLR3A/RPC1, POLR3B/RPC2, POLR1C/RPAC1, POLR1D/RPAC2, POLR3K/RPC10, POLR2E/RPABC1, POLR2F/RPABC2, POLR2H/RPABC3, POLR2K/RPABC4 and POLR2L/RPABC5; a mobile stalk composed of two subunits POLR3H/RPC8 and CRCP/RPC9, protruding from the core and functioning primarily in transcription initiation; and additional subunits homologous to general transcription factors of the RNA polymerase II machinery, POLR3C/RPC3-POLR3F/RPC6-POLR3G/RPC7 heterotrimer required for transcription initiation and POLR3D/RPC4-POLR3E/RPC5 heterodimer involved in both transcription initiation and termination. Directly interacts with POLR3C. Interacts with TBP and TFIIIB90 and GTF3C4. Interacts with MAF1. As part of the RNA polymerase III complex, interacts with PKP2.

It localises to the nucleus. Its function is as follows. DNA-dependent RNA polymerase catalyzes the transcription of DNA into RNA using the four ribonucleoside triphosphates as substrates. Specific peripheric component of RNA polymerase III (Pol III) which synthesizes small non-coding RNAs including 5S rRNA, snRNAs, tRNAs and miRNAs from at least 500 distinct genomic loci. Part of POLR3C/RPC3-POLR3F/RPC6-POLR3G/RPC7 heterotrimer that coordinates the dynamics of Pol III stalk and clamp modules during the transition from apo to elongation state. Pol III plays a key role in sensing and limiting infection by intracellular bacteria and DNA viruses, including varicella zoster virus. Acts as a nuclear and cytosolic DNA sensor detecting AT-rich DNA, involved in innate immune response. Can sense non-self dsDNA that serves as template for transcription into dsRNA. The non-self RNA polymerase III transcripts, such as Epstein-Barr virus-encoded RNAs (EBERs) induce type I interferon and NF-kappa-B through the RIG-I pathway. Preferentially binds double-stranded DNA (dsDNA). This is DNA-directed RNA polymerase III subunit RPC6 from Homo sapiens (Human).